We begin with the raw amino-acid sequence, 709 residues long: UV-stimulated scaffold protein A (709 aa).

Basic and acidic residues predominate over residues 1-10 (MDQKLSKLVE). The interval 1-20 (MDQKLSKLVEELTTSGEPRL) is disordered. The tract at residues 2–145 (DQKLSKLVEE…HFLRHNKKVD (144 aa)) is VHS-like. Positions 165 to 199 (KHLDKIYQERASQAEREMQEMSGEIESCLTEVESC) form a coiled coil. Disordered stretches follow at residues 230–289 (SCAG…DSDL) and 386–406 (EGGE…EDDE). Positions 280–289 (PSDEDEDSDL) are enriched in acidic residues. Ser-281 and Ser-287 each carry phosphoserine. The segment covering 386 to 395 (EGGERRRTEA) has biased composition (basic and acidic residues). Over residues 397–406 (GDAEEDEDDE) the composition is skewed to acidic residues. A Glycyl lysine isopeptide (Lys-Gly) (interchain with G-Cter in ubiquitin) cross-link involves residue Lys-414. The segment at 469-495 (DHLPPPSSASPSRALPEPQEAQKLAAE) is disordered. Over residues 477–486 (ASPSRALPEP) the composition is skewed to low complexity. The UVSSA-type zinc-finger motif lies at 564–591 (QHWCRAPRPDGRLCERQDRLKCPFHGKI). Residues Cys-567, Cys-577, Cys-585, and His-588 each contribute to the Zn(2+) site. A disordered region spans residues 588-655 (HGKIVPRDDE…GKGRGKKRRY (68 aa)). Residues 592-632 (VPRDDEGRPLDPEDRAREQRRQLQKQERPEWQDPELMRDVE) show a composition bias toward basic and acidic residues. The segment covering 646-655 (GKGRGKKRRY) has biased composition (basic residues).

Belongs to the UVSSA family. In terms of assembly, interacts with the elongating form of RNA polymerase II (RNA pol IIo) during transcription stress. Interacts with the TFIIH complex during transcription stress. Interacts with ERCC6. Interacts with ERCC8. Interacts with USP7. In terms of processing, monoubiquitinated at Lys-414 in response to transcription stress; this promotes efficient transfer of TFIIH to stalled RNA polymerase II.

The protein resides in the chromosome. Functionally, factor involved in transcription-coupled nucleotide excision repair (TC-NER), a mechanism that rapidly removes RNA polymerase II-blocking lesions from the transcribed strand of active genes. Acts as a key adapter that promotes recruitment of factors involved in TC-NER. Facilitates the ubiquitination of the elongating form of RNA polymerase II (RNA pol IIo) at DNA damage sites, thereby promoting RNA pol IIo backtracking and access by the TC-NER machinery to lesion sites. Also promotes stabilization of ERCC6/CSB by recruiting deubiquitinating enzyme USP7 to TC-NER complexes, preventing UV-induced degradation of ERCC6 by the proteasome. Mediates the recruitment of the TFIIH complex and other factors that are required for nucleotide excision repair to RNA polymerase II. Also required to inactivate stalled RNA polymerase II by blocking the access of TCEA1/TFIIS, thereby preventing reactivation of RNA polymerase II. Not involved in processing oxidative damage. The chain is UV-stimulated scaffold protein A from Homo sapiens (Human).